The sequence spans 152 residues: Ribosome maturation factor RimP (152 aa).

The protein belongs to the RimP family.

It localises to the cytoplasm. Functionally, required for maturation of 30S ribosomal subunits. This Teredinibacter turnerae (strain ATCC 39867 / T7901) protein is Ribosome maturation factor RimP.